We begin with the raw amino-acid sequence, 364 residues long: UDP-N-acetylglucosamine--N-acetylmuramyl-(pentapeptide) pyrophosphoryl-undecaprenol N-acetylglucosamine transferase (364 aa).

UDP-N-acetyl-alpha-D-glucosamine is bound by residues 10–12 (TGG), Asn-128, Arg-170, Ser-199, Ile-250, and Gln-295.

This sequence belongs to the glycosyltransferase 28 family. MurG subfamily.

The protein localises to the cell inner membrane. The catalysed reaction is di-trans,octa-cis-undecaprenyl diphospho-N-acetyl-alpha-D-muramoyl-L-alanyl-D-glutamyl-meso-2,6-diaminopimeloyl-D-alanyl-D-alanine + UDP-N-acetyl-alpha-D-glucosamine = di-trans,octa-cis-undecaprenyl diphospho-[N-acetyl-alpha-D-glucosaminyl-(1-&gt;4)]-N-acetyl-alpha-D-muramoyl-L-alanyl-D-glutamyl-meso-2,6-diaminopimeloyl-D-alanyl-D-alanine + UDP + H(+). It participates in cell wall biogenesis; peptidoglycan biosynthesis. Functionally, cell wall formation. Catalyzes the transfer of a GlcNAc subunit on undecaprenyl-pyrophosphoryl-MurNAc-pentapeptide (lipid intermediate I) to form undecaprenyl-pyrophosphoryl-MurNAc-(pentapeptide)GlcNAc (lipid intermediate II). In Chlorobaculum tepidum (strain ATCC 49652 / DSM 12025 / NBRC 103806 / TLS) (Chlorobium tepidum), this protein is UDP-N-acetylglucosamine--N-acetylmuramyl-(pentapeptide) pyrophosphoryl-undecaprenol N-acetylglucosamine transferase.